A 143-amino-acid chain; its full sequence is ATP synthase subunit b' (143 aa).

A helical membrane pass occupies residues 6-26; that stretch reads ATLPFMALQFLLLAAVLNAIF.

This sequence belongs to the ATPase B chain family. As to quaternary structure, F-type ATPases have 2 components, F(1) - the catalytic core - and F(0) - the membrane proton channel. F(1) has five subunits: alpha(3), beta(3), gamma(1), delta(1), epsilon(1). F(0) has four main subunits: a(1), b(1), b'(1) and c(10-14). The alpha and beta chains form an alternating ring which encloses part of the gamma chain. F(1) is attached to F(0) by a central stalk formed by the gamma and epsilon chains, while a peripheral stalk is formed by the delta, b and b' chains.

The protein resides in the cellular thylakoid membrane. Functionally, f(1)F(0) ATP synthase produces ATP from ADP in the presence of a proton or sodium gradient. F-type ATPases consist of two structural domains, F(1) containing the extramembraneous catalytic core and F(0) containing the membrane proton channel, linked together by a central stalk and a peripheral stalk. During catalysis, ATP synthesis in the catalytic domain of F(1) is coupled via a rotary mechanism of the central stalk subunits to proton translocation. In terms of biological role, component of the F(0) channel, it forms part of the peripheral stalk, linking F(1) to F(0). The b'-subunit is a diverged and duplicated form of b found in plants and photosynthetic bacteria. The sequence is that of ATP synthase subunit b' from Nostoc punctiforme (strain ATCC 29133 / PCC 73102).